A 372-amino-acid polypeptide reads, in one-letter code: Probable L-tyrosine/L-aspartate decarboxylase (372 aa).

N6-(pyridoxal phosphate)lysine is present on lysine 215.

Belongs to the group II decarboxylase family. MfnA subfamily. Pyridoxal 5'-phosphate is required as a cofactor.

It carries out the reaction L-tyrosine + H(+) = tyramine + CO2. It catalyses the reaction L-aspartate + H(+) = beta-alanine + CO2. It participates in cofactor biosynthesis; methanofuran biosynthesis. Its pathway is cofactor biosynthesis; coenzyme A biosynthesis. Functionally, catalyzes the decarboxylation of L-tyrosine to produce tyramine for methanofuran biosynthesis. Can also catalyze the decarboxylation of L-aspartate to produce beta-alanine for coenzyme A (CoA) biosynthesis. This chain is Probable L-tyrosine/L-aspartate decarboxylase, found in Methanopyrus kandleri (strain AV19 / DSM 6324 / JCM 9639 / NBRC 100938).